Reading from the N-terminus, the 631-residue chain is MSATKLTRREQRAQAQHFIDTLEGTAFPNSKRIYITGSQPDIRIPMREIQLSPTLIGGGKDNPQYEENEAIPVYDTSGPYGDPDVAINVQQGLAKLRQPWIEARADSEELTDRSSAYTKERLADDGLDELRFTGLLTPKRAKAGKCVTQLHYARQGIVTPEMEFIAIRENMGRERIRGDVLRQQHPGVGFGARLPENITPEFVRDEVAAGRAIIPANINHPESEPMIIGRNFLVKVNANIGNSAVTSSIEEEVEKLVWSTRWGADTVMDLSTGRYIHETREWILRNSPVPIGTVPIYQALEKVNGIAEDLTWEAFRDTLLEQAEQGVDYFTIHAGVLLRYVPMTAKRLTGIVSRGGSIMAKWCLSHHQENFLYEHFREICEICAAYDVSLSLGDGLRPGSIQDANDEAQFAELHTLGELTKIAWEYDVQVMIEGPGHVPMQMIRRNMTEELEHCHEAPFYTLGPLTTDIAPGYDHFTSGIGAAMIGWFGCAMLCYVTPKEHLGLPNKEDVKQGLITYKIAAHAADLAKGHPGAQIRDNAMSKARFEFRWEDQFNLALDPFTARAYHDETLPQESGKVAHFCSMCGPKFCSMKISQEVRDYAAAQTIEVGMADMSENFRAKGGEIYLRKEEA.

Residues N239, M268, Y297, H333, 353–355 (SRG), 394–397 (DGLR), and E433 each bind substrate. H437 is a binding site for Zn(2+). Position 460 (Y460) interacts with substrate. H501 contributes to the Zn(2+) binding site. Positions 581, 584, and 589 each coordinate [4Fe-4S] cluster.

It belongs to the ThiC family. As to quaternary structure, homodimer. Requires [4Fe-4S] cluster as cofactor.

It catalyses the reaction 5-amino-1-(5-phospho-beta-D-ribosyl)imidazole + S-adenosyl-L-methionine = 4-amino-2-methyl-5-(phosphooxymethyl)pyrimidine + CO + 5'-deoxyadenosine + formate + L-methionine + 3 H(+). The protein operates within cofactor biosynthesis; thiamine diphosphate biosynthesis. In terms of biological role, catalyzes the synthesis of the hydroxymethylpyrimidine phosphate (HMP-P) moiety of thiamine from aminoimidazole ribotide (AIR) in a radical S-adenosyl-L-methionine (SAM)-dependent reaction. This chain is Phosphomethylpyrimidine synthase, found in Citrobacter koseri (strain ATCC BAA-895 / CDC 4225-83 / SGSC4696).